The sequence spans 263 residues: uncharacterized protein (263 aa).

13–20 (TGSTSGIG) contacts NADP(+). A substrate-binding site is contributed by Ser-141. The active-site Proton acceptor is Tyr-154.

It belongs to the short-chain dehydrogenases/reductases (SDR) family.

This is an uncharacterized protein from Bacillus subtilis (strain 168).